A 419-amino-acid polypeptide reads, in one-letter code: MTTQLEQAWELAKQRFAAVGIDVEEALRQLDRLPVSMHCWQGDDVAGFENREGSLTGGIQSTGNYPGKARNATELRADLEQALRLIPGPKRLNLHAIYLESDTPVARDQIKPEHFKNWVEWAKANRLGLDFNPTCFSHPLSADGFTLSHPDAKIRQFWIDHCKASRRVSAYFGEQLGTPSVMNIWIPDGMKDITVDRLAPRQRLLEALDEVISEKFDPAHHIDAVESKLFGIGAESYTVGSNEFYMGYATSRQTALCLDAGHFHPTEVISDKISAAMLYVPRLLLHVSRPVRWDSDHVVLLDDETQAIASEIVRHNLFDRVHIGLDFFDASINRVAAWVIGTRNMKKALLRALLEPTDQLRQLEASGDYTVRLALLEEQKSLPWQAVWEMYCQRHDTPTGSQWLDSVRTYEKEILSKRS.

H262, D294, and D296 together coordinate Mn(2+).

Belongs to the rhamnose isomerase family. In terms of assembly, homotetramer. It depends on Mn(2+) as a cofactor.

The protein localises to the cytoplasm. The catalysed reaction is L-rhamnopyranose = L-rhamnulose. It functions in the pathway carbohydrate degradation; L-rhamnose degradation; glycerone phosphate from L-rhamnose: step 1/3. Catalyzes the interconversion of L-rhamnose and L-rhamnulose. This Salmonella gallinarum (strain 287/91 / NCTC 13346) protein is L-rhamnose isomerase.